The sequence spans 334 residues: MASVQEKLITCVCQDKPAKPTNKITIVGVGQVGMACAVSVLLKELADELALVDILEDKLKGEMMDLQHGSLFLKTPTIVADKDYSVTANSRIVVVTGGVRQQEGESRLNLVQRNVNIFKFIIPQIVKYSPDCIILVVSNPVDILTYVTWKLSGLPQHRIIGSGTNLDSARFRHLIAEKLGVHPTSCHGFILGEHGDSSVAVWSGVNVAGVSLQSLKPDIGTDEDCCKWKEVHKQVVDSAYEVIKLKGYTNWAIGFSVAEIVESITKNLGRVHPVSTMVKGMYGIETEVFLSLPCVLNGNGLTSVINQKLKDNEVGQLQKSAETLWSIQKDLKDL.

NAD(+) contacts are provided by residues 30-58 (GQVG…LEDK) and Arg-100. Substrate is bound by residues Arg-107, Asn-139, and Arg-170. Asn-139 lines the NAD(+) pocket. The active-site Proton acceptor is His-194. Thr-249 is a substrate binding site.

The protein belongs to the LDH/MDH superfamily. LDH family. As to quaternary structure, homotetramer.

The protein localises to the cytoplasm. It catalyses the reaction (S)-lactate + NAD(+) = pyruvate + NADH + H(+). Its pathway is fermentation; pyruvate fermentation to lactate; (S)-lactate from pyruvate: step 1/1. In terms of biological role, interconverts simultaneously and stereospecifically pyruvate and lactate with concomitant interconversion of NADH and NAD(+). The polypeptide is L-lactate dehydrogenase A chain (ldha) (Xenopus laevis (African clawed frog)).